A 411-amino-acid chain; its full sequence is 6-hydroxytryprostatin B O-methyltransferase (411 aa).

D270 contacts S-adenosyl-L-methionine. Catalysis depends on H313, which acts as the Proton acceptor.

This sequence belongs to the class I-like SAM-binding methyltransferase superfamily. Cation-independent O-methyltransferase family. In terms of assembly, homodimer.

It catalyses the reaction 6-hydroxytryprostatin B + S-adenosyl-L-methionine = tryprostatin A + S-adenosyl-L-homocysteine + H(+). Its pathway is alkaloid biosynthesis. Its function is as follows. 6-hydroxytryprostatin B O-methyltransferase; part of the gene cluster that mediates the biosynthesis of fumitremorgins, indole alkaloids that carry not only intriguing chemical structures, but also interesting biological and pharmacological activities. The biosynthesis of fumitremorgin-type alkaloids begins by condensation of the two amino acids L-tryptophan and L-proline to brevianamide F, catalyzed by the non-ribosomal peptide synthetase ftmPS/ftmA. Brevianamide F is then prenylated by the prenyltransferase ftmPT1/ftmB in the presence of dimethylallyl diphosphate, resulting in the formation of tryprostatin B. The three cytochrome P450 monooxygenases, ftmP450-1/ftmC, ftmP450-2/ftmE and ftmP450-3/FtmG, are responsible for the conversion of tryprostatin B to 6-hydroxytryprostatin B, tryprostatin A to fumitremorgin C and fumitremorgin C to 12,13-dihydroxyfumitremorgin C, respectively. The putative methyltransferase ftmMT/ftmD is expected for the conversion of 6-hydroxytryprostatin B to tryprostatin A. FtmPT2/FtmH catalyzes the prenylation of 12,13-dihydroxyfumitre-morgin C in the presence of dimethylallyl diphosphate, resulting in the formation of fumitremorgin B. Fumitremorgin B is further converted to verruculogen by ftmOx1/ftmF via the insertion of an endoperoxide bond between the two prenyl moieties. Finally, verruculogen is further converted to fumitremorgin A by the verruculogen prenyltransferase ftmPT3. This chain is 6-hydroxytryprostatin B O-methyltransferase, found in Neosartorya fischeri (strain ATCC 1020 / DSM 3700 / CBS 544.65 / FGSC A1164 / JCM 1740 / NRRL 181 / WB 181) (Aspergillus fischerianus).